We begin with the raw amino-acid sequence, 473 residues long: Cytochrome P450 716A2 (473 aa).

Residues 1–21 (MYLTIIFLFISSIIFPLLFFL) form a helical membrane-spanning segment. Position 420 (C420) interacts with heme.

It belongs to the cytochrome P450 family. Heme is required as a cofactor.

The protein localises to the membrane. Possesses triterpene oxidizing activity. Catalyzes the C28 hydroxylation of alpha-amyrin, beta-amyrin, and lupeol, producing uvaol, erythrodiol, and betulin, respectively. Catalyzes the C28 carboxylation of alpha- and beta-amyrin. Possesses 22alpha-hydroxylation activity against alpha- and beta-amaryn. This Arabidopsis thaliana (Mouse-ear cress) protein is Cytochrome P450 716A2.